Consider the following 461-residue polypeptide: Argininosuccinate lyase (461 aa).

The protein belongs to the lyase 1 family. Argininosuccinate lyase subfamily.

Its subcellular location is the cytoplasm. The catalysed reaction is 2-(N(omega)-L-arginino)succinate = fumarate + L-arginine. It functions in the pathway amino-acid biosynthesis; L-arginine biosynthesis; L-arginine from L-ornithine and carbamoyl phosphate: step 3/3. This is Argininosuccinate lyase from Shewanella piezotolerans (strain WP3 / JCM 13877).